We begin with the raw amino-acid sequence, 156 residues long: ATP synthase subunit b (156 aa).

A helical membrane pass occupies residues 11–31; sequence AIAFVLFVLFCMKYVWPPIMA.

It belongs to the ATPase B chain family. F-type ATPases have 2 components, F(1) - the catalytic core - and F(0) - the membrane proton channel. F(1) has five subunits: alpha(3), beta(3), gamma(1), delta(1), epsilon(1). F(0) has three main subunits: a(1), b(2) and c(10-14). The alpha and beta chains form an alternating ring which encloses part of the gamma chain. F(1) is attached to F(0) by a central stalk formed by the gamma and epsilon chains, while a peripheral stalk is formed by the delta and b chains.

It localises to the cell inner membrane. Functionally, f(1)F(0) ATP synthase produces ATP from ADP in the presence of a proton or sodium gradient. F-type ATPases consist of two structural domains, F(1) containing the extramembraneous catalytic core and F(0) containing the membrane proton channel, linked together by a central stalk and a peripheral stalk. During catalysis, ATP synthesis in the catalytic domain of F(1) is coupled via a rotary mechanism of the central stalk subunits to proton translocation. Component of the F(0) channel, it forms part of the peripheral stalk, linking F(1) to F(0). This is ATP synthase subunit b from Proteus mirabilis (strain HI4320).